The primary structure comprises 122 residues: UPF0102 protein BARBAKC583_1042 (122 aa).

It belongs to the UPF0102 family.

The protein is UPF0102 protein BARBAKC583_1042 of Bartonella bacilliformis (strain ATCC 35685 / KC583 / Herrer 020/F12,63).